Here is a 217-residue protein sequence, read N- to C-terminus: MGQKVHPIGMRVGVIRDWDAKWYAEKEYADYLHEDLAIRQLIQTKLADASVSLIETERAINKVIVTLHTAKPGMVIGKSGANVDALRAELNKLTGKQVHINIVEIKKPDLDAHLVGEGIAKQLEARIAFRRAQKQAIQRAMRAGAKGIKTQVSGRLNGADIARAEGYSEGTVPLHTLRADIDYAWEEADTTYGKLGVKVWIYRGEVLPTKKSVKGEK.

The region spanning 38-106 is the KH type-2 domain; that stretch reads IRQLIQTKLA…QVHINIVEIK (69 aa).

This sequence belongs to the universal ribosomal protein uS3 family. As to quaternary structure, part of the 30S ribosomal subunit. Forms a tight complex with proteins S10 and S14.

Its function is as follows. Binds the lower part of the 30S subunit head. Binds mRNA in the 70S ribosome, positioning it for translation. The polypeptide is Small ribosomal subunit protein uS3 (Lactococcus lactis subsp. cremoris (strain MG1363)).